A 243-amino-acid chain; its full sequence is UPF0758 protein MAE_44350 (243 aa).

The 123-residue stretch at 113–235 folds into the MPN domain; the sequence is VIDSPDTAAA…FQSLRQITDL (123 aa). Residues His184, His186, and Asp197 each coordinate Zn(2+). The JAMM motif motif lies at 184 to 197; that stretch reads HNHPTGSLVPSQDD.

This sequence belongs to the UPF0758 family.

The polypeptide is UPF0758 protein MAE_44350 (Microcystis aeruginosa (strain NIES-843 / IAM M-2473)).